A 338-amino-acid polypeptide reads, in one-letter code: Glycerol-3-phosphate dehydrogenase [NAD(P)+] (338 aa).

3 residues coordinate NADPH: tryptophan 12, histidine 33, and lysine 110. Sn-glycerol 3-phosphate contacts are provided by lysine 110, glycine 142, and serine 144. Position 146 (alanine 146) interacts with NADPH. The sn-glycerol 3-phosphate site is built by lysine 197, aspartate 250, serine 260, arginine 261, and asparagine 262. The active-site Proton acceptor is lysine 197. Arginine 261 contacts NADPH. NADPH-binding residues include valine 286 and glutamate 288.

It belongs to the NAD-dependent glycerol-3-phosphate dehydrogenase family.

Its subcellular location is the cytoplasm. The enzyme catalyses sn-glycerol 3-phosphate + NAD(+) = dihydroxyacetone phosphate + NADH + H(+). It catalyses the reaction sn-glycerol 3-phosphate + NADP(+) = dihydroxyacetone phosphate + NADPH + H(+). Its pathway is membrane lipid metabolism; glycerophospholipid metabolism. Functionally, catalyzes the reduction of the glycolytic intermediate dihydroxyacetone phosphate (DHAP) to sn-glycerol 3-phosphate (G3P), the key precursor for phospholipid synthesis. The chain is Glycerol-3-phosphate dehydrogenase [NAD(P)+] from Acidobacterium capsulatum (strain ATCC 51196 / DSM 11244 / BCRC 80197 / JCM 7670 / NBRC 15755 / NCIMB 13165 / 161).